The following is a 282-amino-acid chain: Glutamate--LysW ligase ArgX (282 aa).

ATP contacts are provided by residues lysine 87, lysine 127, 131-137, and 167-178; these read GSWGRLV and QEYIQYKGRDIR. Positions 91-277 constitute an ATP-grasp domain; that stretch reads YSKLYREGIP…VAQKLVEYIK (187 aa). Arginine 192 contacts substrate. ATP is bound at residue asparagine 202. 203–204 lines the substrate pocket; the sequence is VA. Residues aspartate 237, glutamate 250, and asparagine 252 each coordinate Mg(2+). 256 to 260 contacts substrate; that stretch reads EFKGF. The short motif at 259–260 is the GF motif that is essential for ArgX substrate specificity element; the sequence is GF.

It belongs to the RimK family. LysX subfamily. In terms of assembly, homotetramer. Interacts with LysW. It depends on Mg(2+) as a cofactor.

The enzyme catalyses [amino-group carrier protein]-C-terminal-L-glutamate + L-glutamate + ATP = [amino-group carrier protein]-C-terminal-gamma-(L-glutamyl)-L-glutamate + ADP + phosphate + H(+). Its pathway is amino-acid biosynthesis; L-arginine biosynthesis. In terms of biological role, catalyzes the ATP-dependent formation of a covalent bond between the amino group of glutamate and the gamma-carboxyl group of the C-terminal glutamate residue in LysW. This Sulfurisphaera tokodaii (strain DSM 16993 / JCM 10545 / NBRC 100140 / 7) (Sulfolobus tokodaii) protein is Glutamate--LysW ligase ArgX.